We begin with the raw amino-acid sequence, 981 residues long: uncharacterized protein (981 aa).

One can recognise a Carrier domain in the interval 535 to 612; that stretch reads VLLNPVAIEI…SIASIIQKKS (78 aa). At Ser571 the chain carries O-(pantetheine 4'-phosphoryl)serine.

It belongs to the ATP-dependent AMP-binding enzyme family.

This is an uncharacterized protein from Schizosaccharomyces pombe (strain 972 / ATCC 24843) (Fission yeast).